The chain runs to 436 residues: Adenylyltransferase and sulfurtransferase UBA4 (436 aa).

Residues glycine 74, aspartate 95, 102-106 (SNLHR), lysine 119, and 163-164 (DT) contribute to the ATP site. Residues cysteine 205 and cysteine 208 each contribute to the Zn(2+) site. Cysteine 222 functions as the Glycyl thioester intermediate; for adenylyltransferase activity in the catalytic mechanism. Zn(2+) is bound by residues cysteine 283 and cysteine 286. The region spanning 335–434 (NEKDHILIDV…YIDEEDHSYP (100 aa)) is the Rhodanese domain. Catalysis depends on cysteine 393, which acts as the Cysteine persulfide intermediate; for sulfurtransferase activity.

In the N-terminal section; belongs to the HesA/MoeB/ThiF family. UBA4 subfamily. Zn(2+) serves as cofactor.

It localises to the cytoplasm. The protein resides in the cytosol. Its pathway is tRNA modification; 5-methoxycarbonylmethyl-2-thiouridine-tRNA biosynthesis. Plays a central role in 2-thiolation of mcm(5)S(2)U at tRNA wobble positions of cytosolic tRNA(Lys), tRNA(Glu) and tRNA(Gln). Acts by mediating the C-terminal thiocarboxylation of sulfur carrier URM1. Its N-terminus first activates URM1 as acyl-adenylate (-COAMP), then the persulfide sulfur on the catalytic cysteine is transferred to URM1 to form thiocarboxylation (-COSH) of its C-terminus. The reaction probably involves hydrogen sulfide that is generated from the persulfide intermediate and that acts as a nucleophile towards URM1. Subsequently, a transient disulfide bond is formed. Does not use thiosulfate as sulfur donor; NFS1 probably acting as a sulfur donor for thiocarboxylation reactions. Prior mcm(5) tRNA modification by the elongator complex is required for 2-thiolation. May also be involved in protein urmylation. The polypeptide is Adenylyltransferase and sulfurtransferase UBA4 (Vanderwaltozyma polyspora (strain ATCC 22028 / DSM 70294 / BCRC 21397 / CBS 2163 / NBRC 10782 / NRRL Y-8283 / UCD 57-17) (Kluyveromyces polysporus)).